A 935-amino-acid chain; its full sequence is Lon protease homolog 2, peroxisomal (935 aa).

The 285-residue stretch at 12-296 (LPVHRLERNL…NLRRLVEEMG (285 aa)) folds into the Lon N-terminal domain. 452–459 (GPPGVGKT) is a binding site for ATP. Residues 692–922 (QKGYGVVNGL…SDVLASVWEG (231 aa)) form the Lon proteolytic domain. Residues Ser-789 and Lys-832 contribute to the active site. The Microbody targeting signal signature appears at 933–935 (ARI).

It belongs to the peptidase S16 family.

The protein resides in the peroxisome matrix. The catalysed reaction is Hydrolysis of proteins in presence of ATP.. Functionally, ATP-dependent serine protease that mediates the selective degradation of misfolded and unassembled polypeptides in the peroxisomal matrix. Necessary for type 2 peroxisome targeting signal (PTS2)-containing protein processing and facilitates peroxisome matrix protein import. This is Lon protease homolog 2, peroxisomal (PLN) from Pichia angusta (Yeast).